Here is a 1326-residue protein sequence, read N- to C-terminus: Putative late blight resistance protein homolog R1B-19 (1326 aa).

Coiled-coil stretches lie at residues 421–444 (RYSD…ESLQ) and 536–558 (PRMK…KLLN). Residue 570–577 (GMPGLGKT) coordinates ATP. The NB-ARC domain maps to 611-864 (LLSLLCDTIG…KVKTCRLHDV (254 aa)). The stretch at 749–770 (SEMEKEVECWEQVANNLGTRIH) forms a coiled coil. LRR repeat units follow at residues 953–978 (FKFL…VYLK), 980–996 (FSAH…IYNL), 1027–1050 (LRHL…SAKL), 1053–1070 (LETL…LNFP), 1071–1094 (IRLE…ISAP), 1098–1118 (YLKL…ADHL), 1119–1146 (KNLE…MFPQ), 1167–1191 (FPNL…AMNI), and 1208–1230 (LIEK…AFKR). Residues 1209–1278 (IEKKTLKLNL…AWHARVVVPT (70 aa)) enclose the HMA domain.

The protein belongs to the disease resistance NB-LRR family.

The protein localises to the cytoplasm. It localises to the membrane. Functionally, confers resistance to late blight (Phytophthora infestans) races carrying the avirulence gene Avr1. Resistance proteins guard the plant against pathogens that contain an appropriate avirulence protein via an indirect interaction with this avirulence protein. That triggers a defense system including the hypersensitive response, which restricts the pathogen growth. In Solanum demissum (Wild potato), this protein is Putative late blight resistance protein homolog R1B-19 (R1B-19).